The chain runs to 526 residues: Dual specificity tyrosine-phosphorylation-regulated kinase 2 (526 aa).

2 stretches are compositionally biased toward polar residues: residues 30–40 and 60–70; these read TTQPNGLTTLG and GSSSSLKSTDG. The disordered stretch occupies residues 30–76; sequence TTQPNGLTTLGKSGLPVVQDRQSESAHRRQGSSSSLKSTDGTGKVKA. A Phosphothreonine; by ATM modification is found at Thr31. The Nuclear localization signal motif lies at 114–116; sequence KKR. Residues 147-460 enclose the Protein kinase domain; sequence YEVLKVIGKG…PSQALRHPWL (314 aa). Residues 153–161, Lys176, and 226–229 contribute to the ATP site; these read IGKGSFGQV and FELL. Residue Asp273 is the Proton acceptor of the active site. A Phosphotyrosine modification is found at Tyr307. Ser367 is modified (phosphoserine; by ATM). The segment at 462–499 is disordered; the sequence is RRLPKPPTGEKASAKRITESTGAITSISKLPPTSSSAS. Positions 480-499 are enriched in polar residues; that stretch reads ESTGAITSISKLPPTSSSAS.

This sequence belongs to the protein kinase superfamily. CMGC Ser/Thr protein kinase family. MNB/DYRK subfamily. Interacts with MDM2. Mg(2+) serves as cofactor. Mn(2+) is required as a cofactor. Phosphorylated on serine/threonine residues. Phosphorylation on Thr-31 and Ser-367 by ATM in response to genotoxic stress disrupts MDM2 binding and prevents MDM2-mediated ubiquitination and subsequent proteasome degradation, thus promoting p53/TP53-mediated apoptosis. In terms of processing, ubiquitination in nucleus by MDM2 in normal conditions leads to proteasome degradation.

The protein resides in the cytoplasm. Its subcellular location is the nucleus. It catalyses the reaction L-seryl-[protein] + ATP = O-phospho-L-seryl-[protein] + ADP + H(+). It carries out the reaction L-threonyl-[protein] + ATP = O-phospho-L-threonyl-[protein] + ADP + H(+). The catalysed reaction is L-tyrosyl-[protein] + ATP = O-phospho-L-tyrosyl-[protein] + ADP + H(+). Its activity is regulated as follows. Autophosphorylates on tyrosine residues. Serine/threonine-protein kinase involved in the control of mitotic transition and the regulation of cellular growth and/or development. The sequence is that of Dual specificity tyrosine-phosphorylation-regulated kinase 2 from Gallus gallus (Chicken).